We begin with the raw amino-acid sequence, 845 residues long: Protein translocase subunit SecA 1 (845 aa).

Residues Q85, 103–107 (GEGKT), and D492 each bind ATP.

This sequence belongs to the SecA family. In terms of assembly, monomer and homodimer. Part of the essential Sec protein translocation apparatus which comprises SecA, SecYEG and auxiliary proteins SecDF. Other proteins may also be involved.

It localises to the cell membrane. The protein localises to the cytoplasm. The enzyme catalyses ATP + H2O + cellular proteinSide 1 = ADP + phosphate + cellular proteinSide 2.. In terms of biological role, part of the Sec protein translocase complex. Interacts with the SecYEG preprotein conducting channel. Has a central role in coupling the hydrolysis of ATP to the transfer of proteins into and across the cell membrane, serving as an ATP-driven molecular motor driving the stepwise translocation of polypeptide chains across the membrane. The polypeptide is Protein translocase subunit SecA 1 (Corynebacterium efficiens (strain DSM 44549 / YS-314 / AJ 12310 / JCM 11189 / NBRC 100395)).